Here is a 230-residue protein sequence, read N- to C-terminus: Increased recombination centers protein 19 (230 aa).

This sequence belongs to the IRC19 family.

Functionally, involved in sporulation and maintenance of the mitochondrial DNA. Is probably involved in a pathway contributing to genomic integrity. The sequence is that of Increased recombination centers protein 19 (IRC19) from Saccharomyces cerevisiae (strain JAY291) (Baker's yeast).